Here is a 198-residue protein sequence, read N- to C-terminus: MMNFIRTLLIYEIILLKIYHIIKLLHQQQVVAYPTEAMFGLGCDPDSEKAVHTLLTLKKRDWQKGLILVAANYEQLANYIDDNSLNINQRARMFSLWPGPITWTIPARTTTPCWLTGKFSTLAVRISAFKPVRMLCLAFGKPIVSTSANVSGQSPARNICEVRQQFGAAFPVMDQIIEGRYSPSEIRDAISGQLIRRG.

Residues 15 to 198 (LLKIYHIIKL…AISGQLIRRG (184 aa)) enclose the YrdC-like domain.

It belongs to the SUA5 family. TsaC subfamily.

The protein localises to the cytoplasm. The enzyme catalyses L-threonine + hydrogencarbonate + ATP = L-threonylcarbamoyladenylate + diphosphate + H2O. Its function is as follows. Required for the formation of a threonylcarbamoyl group on adenosine at position 37 (t(6)A37) in tRNAs that read codons beginning with adenine. Catalyzes the conversion of L-threonine, HCO(3)(-)/CO(2) and ATP to give threonylcarbamoyl-AMP (TC-AMP) as the acyladenylate intermediate, with the release of diphosphate. This Baumannia cicadellinicola subsp. Homalodisca coagulata protein is Threonylcarbamoyl-AMP synthase.